The primary structure comprises 208 residues: Uracil phosphoribosyltransferase (208 aa).

Residues Arg-78, Arg-103, and 130 to 138 (DPMLATGGT) contribute to the 5-phospho-alpha-D-ribose 1-diphosphate site. Uracil is bound by residues Ile-193 and 198–200 (GDA). 5-phospho-alpha-D-ribose 1-diphosphate is bound at residue Asp-199.

Belongs to the UPRTase family. Mg(2+) serves as cofactor.

The enzyme catalyses UMP + diphosphate = 5-phospho-alpha-D-ribose 1-diphosphate + uracil. It functions in the pathway pyrimidine metabolism; UMP biosynthesis via salvage pathway; UMP from uracil: step 1/1. With respect to regulation, allosterically activated by GTP. Catalyzes the conversion of uracil and 5-phospho-alpha-D-ribose 1-diphosphate (PRPP) to UMP and diphosphate. In Solidesulfovibrio magneticus (strain ATCC 700980 / DSM 13731 / RS-1) (Desulfovibrio magneticus), this protein is Uracil phosphoribosyltransferase.